We begin with the raw amino-acid sequence, 89 residues long: Elongation factor 1-beta (89 aa).

This sequence belongs to the EF-1-beta/EF-1-delta family.

Promotes the exchange of GDP for GTP in EF-1-alpha/GDP, thus allowing the regeneration of EF-1-alpha/GTP that could then be used to form the ternary complex EF-1-alpha/GTP/AAtRNA. This is Elongation factor 1-beta (ef1b) from Methanocaldococcus jannaschii (strain ATCC 43067 / DSM 2661 / JAL-1 / JCM 10045 / NBRC 100440) (Methanococcus jannaschii).